Here is a 397-residue protein sequence, read N- to C-terminus: Acetate kinase (397 aa).

Mg(2+) is bound at residue Asn-8. Lys-15 is a binding site for ATP. Residue Arg-89 coordinates substrate. The Proton donor/acceptor role is filled by Asp-146. ATP is bound by residues His-206 to Gly-210, Asp-281 to Arg-283, and Gly-329 to Asn-333. Glu-382 is a Mg(2+) binding site.

Belongs to the acetokinase family. In terms of assembly, homodimer. The cofactor is Mg(2+). Mn(2+) serves as cofactor.

Its subcellular location is the cytoplasm. The enzyme catalyses acetate + ATP = acetyl phosphate + ADP. Its pathway is metabolic intermediate biosynthesis; acetyl-CoA biosynthesis; acetyl-CoA from acetate: step 1/2. Catalyzes the formation of acetyl phosphate from acetate and ATP. Can also catalyze the reverse reaction. This Anoxybacillus flavithermus (strain DSM 21510 / WK1) protein is Acetate kinase.